The primary structure comprises 258 residues: Acyl-[acyl-carrier-protein]--UDP-N-acetylglucosamine O-acyltransferase (258 aa).

The protein belongs to the transferase hexapeptide repeat family. LpxA subfamily. Homotrimer.

The protein localises to the cytoplasm. The catalysed reaction is a (3R)-hydroxyacyl-[ACP] + UDP-N-acetyl-alpha-D-glucosamine = a UDP-3-O-[(3R)-3-hydroxyacyl]-N-acetyl-alpha-D-glucosamine + holo-[ACP]. It functions in the pathway glycolipid biosynthesis; lipid IV(A) biosynthesis; lipid IV(A) from (3R)-3-hydroxytetradecanoyl-[acyl-carrier-protein] and UDP-N-acetyl-alpha-D-glucosamine: step 1/6. Involved in the biosynthesis of lipid A, a phosphorylated glycolipid that anchors the lipopolysaccharide to the outer membrane of the cell. This Pseudomonas fluorescens (strain SBW25) protein is Acyl-[acyl-carrier-protein]--UDP-N-acetylglucosamine O-acyltransferase.